The chain runs to 398 residues: Acetate kinase (398 aa).

Position 7 (asparagine 7) interacts with Mg(2+). Residue lysine 14 participates in ATP binding. Residue arginine 91 coordinates substrate. The active-site Proton donor/acceptor is the aspartate 148. ATP is bound by residues 208–212 (HIGNG), 283–285 (DMR), and 331–335 (GVGEN). Glutamate 385 lines the Mg(2+) pocket.

The protein belongs to the acetokinase family. Homodimer. Requires Mg(2+) as cofactor. The cofactor is Mn(2+).

Its subcellular location is the cytoplasm. The catalysed reaction is acetate + ATP = acetyl phosphate + ADP. Its pathway is metabolic intermediate biosynthesis; acetyl-CoA biosynthesis; acetyl-CoA from acetate: step 1/2. Functionally, catalyzes the formation of acetyl phosphate from acetate and ATP. Can also catalyze the reverse reaction. The chain is Acetate kinase from Porphyromonas gingivalis (strain ATCC BAA-308 / W83).